The primary structure comprises 329 residues: Large ribosomal subunit protein uL3 (329 aa).

It belongs to the universal ribosomal protein uL3 family. In terms of assembly, part of the 50S ribosomal subunit. Forms a cluster with proteins L14 and L24e.

In terms of biological role, one of the primary rRNA binding proteins, it binds directly near the 3'-end of the 23S rRNA, where it nucleates assembly of the 50S subunit. In Picrophilus torridus (strain ATCC 700027 / DSM 9790 / JCM 10055 / NBRC 100828 / KAW 2/3), this protein is Large ribosomal subunit protein uL3.